The primary structure comprises 69 residues: Disintegrin EC6 subunit beta (69 aa).

The 65-residue stretch at 1–65 (NSVHPCCDPV…DCPPNPWNGK (65 aa)) folds into the Disintegrin domain. 4 disulfide bridges follow: Cys-6/Cys-29, Cys-20/Cys-26, Cys-25/Cys-50, and Cys-38/Cys-57. The Cell attachment site motif lies at 42–44 (RGD).

It belongs to the venom metalloproteinase (M12B) family. P-II subfamily. P-IIe sub-subfamily. In terms of assembly, heterodimer with subunit alpha; disulfide-linked. Expressed by the venom gland.

Its subcellular location is the secreted. Its function is as follows. Potently inhibits adhesion of alpha-4/beta-1 (ITGA4/ITGB1) and alpha-9/beta-1 (ITGA9/ITGB1) integrins to VCAM1, and adhesion of alpha-5/beta-1 (ITGA5/ITGB1) integrin to fibronectin. Has a much less effect on alpha-IIb/beta-3 (ITGA2B/ITGB3) integrin. Also potently inhibits neutrophil migration across TNF-alpha-activated human umbilical endothelial cells. This chain is Disintegrin EC6 subunit beta, found in Echis carinatus sochureki (Saw-scaled viper).